The sequence spans 587 residues: MASKKREVQLQSVVNSQNLWDEMLLNKGLTVIDVYQAWCGPCKAVQALFRKLKNELNEDELLHFVVAEADSIVTLQPFRDKCEPVFLFSLNGKIIAKIQGANAPLINRKVIALIDEEKKIAAGEMARPQYVEIPLVDSLDEEYGEVHYESNVEVYNMAVINPDAVLMRKNLEIKEKITKEGFIIEIQENMLLPEEVAREFYNHMIDEPDFEEFVYSMTNRLSCVLIISQGEDTEVIEEEALPQSDDEEEPDPLEEPHVRFAPMLVKKKRDSLQEYMDRQHMSDYCHVEDDAVKVSKFIDILFPDFKTMKSTNVQRTLGLLYPEVCEEEKDNVLDIIQNEGFTILMQRQVVLSEEEARAVCHVHEDEDYFDNLIGYMCSNNSYILVLMREHSVERWKELIGPKTVEEAYASHPDSLCVRFASGNFPVNQFYGSSSKAAAETEIEHFFPPQSTLALIKPHVSHKERMEILKAIRDARFELTQMKEMHLTPEHASKVYFKITGKDFYKNVLDVLSSGMSVVMILTKWNAVGEWRRMMGPVDPEEAKLLSPNSLRARYGIDVLRNAVHGASNMSEAATAISNVFTESNFEN.

A Thioredoxin domain is found at 2–119 (ASKKREVQLQ…VIALIDEEKK (118 aa)). An intrachain disulfide couples Cys39 to Cys42. 3 NDK regions span residues 157–255 (MAVI…PLEE), 313–453 (VQRT…STLA), and 454–587 (LIKP…NFEN).

It in the C-terminal section; belongs to the NDK family. Monomer. As to expression, testis-specific.

It localises to the cytoplasm. Functionally, probably required during the final stages of sperm tail maturation in the testis and/or epididymis, where extensive disulfide bonding of fibrous sheath (FS) proteins occurs. In vitro, it has neither nucleoside diphosphate kinase (NDPK) activity nor reducing activity on disulfide bonds. Exhibits a 3'-5' exonuclease activity with a preference for single-stranded DNA, suggesting roles in DNA proofreading and repair. The protein is Thioredoxin domain-containing protein 3 (Nme8) of Rattus norvegicus (Rat).